Reading from the N-terminus, the 298-residue chain is Porphobilinogen deaminase (298 aa).

Residue Cys239 is modified to S-(dipyrrolylmethanemethyl)cysteine.

It belongs to the HMBS family. Monomer. The cofactor is dipyrromethane.

It catalyses the reaction 4 porphobilinogen + H2O = hydroxymethylbilane + 4 NH4(+). It functions in the pathway porphyrin-containing compound metabolism; protoporphyrin-IX biosynthesis; coproporphyrinogen-III from 5-aminolevulinate: step 2/4. Tetrapolymerization of the monopyrrole PBG into the hydroxymethylbilane pre-uroporphyrinogen in several discrete steps. This chain is Porphobilinogen deaminase, found in Ehrlichia chaffeensis (strain ATCC CRL-10679 / Arkansas).